Here is a 558-residue protein sequence, read N- to C-terminus: Small ribosomal subunit protein bS1 (558 aa).

6 S1 motif domains span residues 21-87, 105-171, 192-260, 277-347, 364-434, and 451-520; these read GSII…LSRE, SETV…VSRR, GMHV…LGLK, ETKL…LGLK, GVHV…LGIK, and GAII…LTIH.

Belongs to the bacterial ribosomal protein bS1 family.

In terms of biological role, binds mRNA; thus facilitating recognition of the initiation point. It is needed to translate mRNA with a short Shine-Dalgarno (SD) purine-rich sequence. The protein is Small ribosomal subunit protein bS1 (rpsA) of Buchnera aphidicola subsp. Acyrthosiphon pisum (strain APS) (Acyrthosiphon pisum symbiotic bacterium).